A 1842-amino-acid polypeptide reads, in one-letter code: Plexin-B2 (1842 aa).

The N-terminal stretch at 1–19 is a signal peptide; that stretch reads MALPLWALTFLGLTGLGLS. Positions 20–468 constitute a Sema domain; it reads LRSRKPESFR…TQDKVFRLPV (449 aa). The Extracellular portion of the chain corresponds to 20–1201; it reads LRSRKPESFR…EYDTRASDVP (1182 aa). 2 cysteine pairs are disulfide-bonded: cysteine 78-cysteine 87 and cysteine 112-cysteine 120. N-linked (GlcNAc...) asparagine glycans are attached at residues asparagine 127 and asparagine 242. Cystine bridges form between cysteine 250/cysteine 366, cysteine 266/cysteine 313, and cysteine 331/cysteine 353. N-linked (GlcNAc...) asparagine glycosylation is found at asparagine 393 and asparagine 451. Cystine bridges form between cysteine 471–cysteine 488, cysteine 477–cysteine 520, cysteine 480–cysteine 497, cysteine 491–cysteine 503, and cysteine 557–cysteine 576. An N-linked (GlcNAc...) asparagine glycan is attached at asparagine 798. IPT/TIG domains are found at residues 806 to 895, 898 to 982, and 986 to 1095; these read PVIT…QFTY, PQPL…SFTY, and PMIR…VFEY. Residues asparagine 919, asparagine 1053, and asparagine 1072 are each glycosylated (N-linked (GlcNAc...) asparagine). The helical transmembrane segment at 1202–1222 threads the bilayer; sequence LSLILPLVMVPMVFIIVVSIY. The Cytoplasmic portion of the chain corresponds to 1223-1842; sequence CYWRKSQQAE…AALENKVTDL (620 aa). Phosphoserine occurs at positions 1240, 1248, and 1574.

Belongs to the plexin family. Monomer, and heterodimer with PLXNB1. Interacts with MET, ARHGEF11 and ARHGEF12. May also interact with MST1R. Detected in macrophages from spleen and bone marrow (at protein level). Detected in granule cells in the developing cerebellum, dentate gyrus and olfactory bulb. Expressed in neurons and glia in the developing hippocampus.

Its subcellular location is the cell membrane. In terms of biological role, cell surface receptor for SEMA4C, SEMA4D and SEMA4G that plays an important role in cell-cell signaling. Plays a role in glutamatergic synapse development and is required for SEMA4A-mediated excitatory synapse development. Binding to class 4 semaphorins promotes downstream activation of RHOA and phosphorylation of ERBB2 at 'Tyr-1248'. Also acts as a cell surface receptor for angiogenin (ANG); promoting ANG endocytosis and translocation to the cytoplasm or nucleus. Required for normal differentiation and migration of neuronal cells during brain corticogenesis and for normal embryonic brain development. Regulates the migration of cerebellar granule cells in the developing brain. Plays a role in RHOA activation and subsequent changes of the actin cytoskeleton. Plays a role in axon guidance, invasive growth and cell migration. May modulate the activity of RAC1 and CDC42. Down-regulates macrophage migration in wound-healing assays (in vitro). In Mus musculus (Mouse), this protein is Plexin-B2.